We begin with the raw amino-acid sequence, 543 residues long: Chaperonin GroEL (543 aa).

ATP contacts are provided by residues 29 to 32 (TLGP), 86 to 90 (DGTTT), Gly413, 477 to 479 (DAL), and Asp493.

This sequence belongs to the chaperonin (HSP60) family. In terms of assembly, forms a cylinder of 14 subunits composed of two heptameric rings stacked back-to-back. Interacts with the co-chaperonin GroES.

It localises to the cytoplasm. It carries out the reaction ATP + H2O + a folded polypeptide = ADP + phosphate + an unfolded polypeptide.. Its function is as follows. Together with its co-chaperonin GroES, plays an essential role in assisting protein folding. The GroEL-GroES system forms a nano-cage that allows encapsulation of the non-native substrate proteins and provides a physical environment optimized to promote and accelerate protein folding. The chain is Chaperonin GroEL from Clostridium botulinum.